The sequence spans 126 residues: Aspartate 1-decarboxylase (126 aa).

S25 (schiff-base intermediate with substrate; via pyruvic acid) is an active-site residue. S25 carries the post-translational modification Pyruvic acid (Ser). A substrate-binding site is contributed by T57. Y58 functions as the Proton donor in the catalytic mechanism. 72–74 (GAA) provides a ligand contact to substrate.

It belongs to the PanD family. As to quaternary structure, heterooctamer of four alpha and four beta subunits. The cofactor is pyruvate. In terms of processing, is synthesized initially as an inactive proenzyme, which is activated by self-cleavage at a specific serine bond to produce a beta-subunit with a hydroxyl group at its C-terminus and an alpha-subunit with a pyruvoyl group at its N-terminus.

The protein resides in the cytoplasm. The catalysed reaction is L-aspartate + H(+) = beta-alanine + CO2. Its pathway is cofactor biosynthesis; (R)-pantothenate biosynthesis; beta-alanine from L-aspartate: step 1/1. In terms of biological role, catalyzes the pyruvoyl-dependent decarboxylation of aspartate to produce beta-alanine. The sequence is that of Aspartate 1-decarboxylase from Campylobacter jejuni subsp. jejuni serotype O:23/36 (strain 81-176).